Here is a 71-residue protein sequence, read N- to C-terminus: MPVIKVRENEPFDVALRRFKRSCEKAGILSEVRRRESYEKPTWERKRKKAAAVKRAAKKVSRENARRVRMY.

The span at 49 to 59 shows a compositional bias: basic residues; it reads KAAAVKRAAKK. A disordered region spans residues 49–71; the sequence is KAAAVKRAAKKVSRENARRVRMY. Positions 60-71 are enriched in basic and acidic residues; that stretch reads VSRENARRVRMY.

It belongs to the bacterial ribosomal protein bS21 family.

The protein is Small ribosomal subunit protein bS21 of Colwellia psychrerythraea (strain 34H / ATCC BAA-681) (Vibrio psychroerythus).